The sequence spans 241 residues: Putative inactive serine protease 58 (241 aa).

A signal peptide spans 1–17; the sequence is MKLAFLCILSTLLRTFA. Residues 18-239 enclose the Peptidase S1 domain; it reads YNPDHIAGTT…YLPWIEDTMK (222 aa). Cysteine 41 and cysteine 57 are joined by a disulfide. Catalysis depends on charge relay system residues histidine 56 and aspartate 101. 3 disulfide bridges follow: cysteine 133–cysteine 201, cysteine 165–cysteine 180, and cysteine 191–cysteine 215. A glycan (N-linked (GlcNAc...) asparagine) is linked at asparagine 156.

This sequence belongs to the peptidase S1 family.

It is found in the secreted. The enzyme catalyses Preferential cleavage: Arg-|-Xaa, Lys-|-Xaa.. In Mus musculus (Mouse), this protein is Putative inactive serine protease 58 (Prss58).